Consider the following 181-residue polypeptide: Epidermin decarboxylase (181 aa).

His67 is an active-site residue.

It belongs to the HFCD (homooligomeric flavin containing Cys decarboxylase) superfamily. In terms of assembly, homododecamer. Requires FMN as cofactor.

Catalyzes the removal of two reducing equivalents (oxidative decarboxylation) from the cysteine residue of the C-terminal meso-lanthionine of epidermin to form a --C==C-- double bond. The sequence is that of Epidermin decarboxylase (epiD) from Staphylococcus epidermidis.